The primary structure comprises 445 residues: GTPase Der (445 aa).

EngA-type G domains follow at residues 3–167 (PVIA…YAGQ) and 180–353 (IKIA…AAAM). Residues 9–16 (GRPNVGKS), 56–60 (DTGGF), 119–122 (NKAE), 186–193 (GRPNVGKS), 233–237 (DTAGL), and 298–301 (NKWD) contribute to the GTP site. The KH-like domain maps to 354 to 438 (AKLPTPKLTR…PLRIEFRSSN (85 aa)).

The protein belongs to the TRAFAC class TrmE-Era-EngA-EngB-Septin-like GTPase superfamily. EngA (Der) GTPase family. In terms of assembly, associates with the 50S ribosomal subunit.

Its function is as follows. GTPase that plays an essential role in the late steps of ribosome biogenesis. In Burkholderia ambifaria (strain ATCC BAA-244 / DSM 16087 / CCUG 44356 / LMG 19182 / AMMD) (Burkholderia cepacia (strain AMMD)), this protein is GTPase Der.